A 1160-amino-acid chain; its full sequence is Major DNA-binding protein (1160 aa).

The Required for filament formation signature appears at 808–809 (FW). The interval 1139–1160 (ARGGEHAFDEDCGLLPAKRGRL) is required for nuclear localization.

Belongs to the herpesviridae major DNA-binding protein family. In terms of assembly, homooligomers. Forms double-helical filaments necessary for the formation of replication compartments within the host nucleus. Interacts with the origin-binding protein. Interacts with the helicase primase complex; this interaction stimulates primer synthesis activity of the helicase-primase complex. Interacts with the DNA polymerase. Interacts with the alkaline exonuclease; this interaction increases its nuclease processivity.

The protein localises to the host nucleus. In terms of biological role, single-stranded DNA-binding protein required for DNA replication. Plays several crucial roles in viral infection. Participates in the opening of the viral DNA origin to initiate replication by interacting with the origin-binding protein. May disrupt loops, hairpins and other secondary structures present on ssDNA to reduce and eliminate pausing of viral DNA polymerase at specific sites during elongation. Promotes viral DNA recombination by performing strand-transfer, characterized by the ability to transfer a DNA strand from a linear duplex to a complementary single-stranded DNA circle. Can also catalyze the renaturation of complementary single strands. Additionally, reorganizes the host cell nucleus, leading to the formation of prereplicative sites and replication compartments. This process is driven by the protein which can form double-helical filaments in the absence of DNA. This chain is Major DNA-binding protein, found in Simian cytomegalovirus (strain Colburn).